We begin with the raw amino-acid sequence, 64 residues long: uncharacterized protein (64 aa).

The segment covering 1 to 14 has biased composition (polar residues); it reads MFNFDPTDQPTDQH. The tract at residues 1–42 is disordered; the sequence is MFNFDPTDQPTDQHLLQLPTDPHPLQQPIDPHPPPQPNNNLP.

This is an uncharacterized protein from Dictyostelium discoideum (Social amoeba).